Consider the following 454-residue polypeptide: tRNA modification GTPase MnmE (454 aa).

(6S)-5-formyl-5,6,7,8-tetrahydrofolate-binding residues include Arg-23, Glu-80, and Lys-120. Residues Gly-216 to Gly-377 form the TrmE-type G domain. Position 226 (Asn-226) interacts with K(+). GTP-binding positions include Asn-226–Ser-231, Thr-245–Thr-251, Asp-270–Gly-273, Asn-335–Asp-338, and Ser-358–Arg-360. Ser-230 contributes to the Mg(2+) binding site. K(+) is bound by residues Thr-245, Ile-247, and Thr-250. Residue Thr-251 coordinates Mg(2+). Lys-454 is a (6S)-5-formyl-5,6,7,8-tetrahydrofolate binding site.

It belongs to the TRAFAC class TrmE-Era-EngA-EngB-Septin-like GTPase superfamily. TrmE GTPase family. As to quaternary structure, homodimer. Heterotetramer of two MnmE and two MnmG subunits. It depends on K(+) as a cofactor.

It localises to the cytoplasm. Exhibits a very high intrinsic GTPase hydrolysis rate. Involved in the addition of a carboxymethylaminomethyl (cmnm) group at the wobble position (U34) of certain tRNAs, forming tRNA-cmnm(5)s(2)U34. The protein is tRNA modification GTPase MnmE of Shigella dysenteriae serotype 1 (strain Sd197).